A 668-amino-acid polypeptide reads, in one-letter code: Patellin-5 (668 aa).

The interval 1-263 (MSQDSATTTP…STTTSTVASR (263 aa)) is disordered. Composition is skewed to basic and acidic residues over residues 55–68 (ESNH…EKVT), 82–100 (AAED…ETAK), 107–125 (TAED…ETVK), and 132–150 (VAED…ETVK). Over residues 170 to 186 (TPETETSEADTSLLVTS) the composition is skewed to polar residues. Over residues 218–231 (VEDWTEPELPDEAV) the composition is skewed to acidic residues. The segment covering 244–254 (PEPQTPPPPPS) has biased composition (pro residues). Phosphoserine is present on Ser290. Residues 377–552 (DENLGDDLDK…QYGGLSVDNC (176 aa)) enclose the CRAL-TRIO domain. Positions 556–662 (SDFTHDDIAT…KKMLIYRFKV (107 aa)) constitute a GOLD domain.

It belongs to the patellin family.

Its subcellular location is the membrane. The protein localises to the cytoplasm. Its function is as follows. Carrier protein that may be involved in membrane-trafficking events associated with cell plate formation during cytokinesis. Binds to some hydrophobic molecules such as phosphoinositides and promotes their transfer between the different cellular sites. This chain is Patellin-5 (PATL5), found in Arabidopsis thaliana (Mouse-ear cress).